The primary structure comprises 204 residues: Casparian strip membrane protein 2 (204 aa).

At 1-41 (MKNESTFIDVPADSSSAMKGKAPLIGVAKDHTASGSGGYNR) the chain is on the cytoplasmic side. A helical membrane pass occupies residues 42–62 (GLSIFDFLLRLAAIVAASVAA). At 63 to 92 (GTMFTSDETLPFFTQFLQFEAGYDDLPTFQ) the chain is on the extracellular side. A helical membrane pass occupies residues 93 to 113 (FFVIAMSLVSGYIVLSLPISV). The Cytoplasmic segment spans residues 114–125 (VTIVRPLAAAPR). Residues 126–146 (LLLLVLDTAVMGLTMAAASSA) traverse the membrane as a helical segment. The Extracellular portion of the chain corresponds to 147-178 (AAISYVAHNGNQNTNWLPICQQFFDFCQKTSG). Residues 179–199 (AVVSSFVAVVFFMILVVLSGV) form a helical membrane-spanning segment. Topologically, residues 200 to 204 (ALERH) are cytoplasmic.

Belongs to the Casparian strip membrane proteins (CASP) family. In terms of assembly, homodimer and heterodimers.

Its subcellular location is the cell membrane. Its function is as follows. Regulates membrane-cell wall junctions and localized cell wall deposition. Required for establishment of the Casparian strip membrane domain (CSD) and the subsequent formation of Casparian strips, a cell wall modification of the root endodermis that determines an apoplastic barrier between the intraorganismal apoplasm and the extraorganismal apoplasm and prevents lateral diffusion. In Raphanus sativus (Radish), this protein is Casparian strip membrane protein 2.